We begin with the raw amino-acid sequence, 50 residues long: Large ribosomal subunit protein bL33 (50 aa).

This sequence belongs to the bacterial ribosomal protein bL33 family.

This chain is Large ribosomal subunit protein bL33, found in Sulfurovum sp. (strain NBC37-1).